The chain runs to 1322 residues: Serine/threonine-protein phosphatase UIS2 (1322 aa).

Residues 1-22 form the signal peptide; that stretch reads MNISKFFLIFIPLVLFKYPANN. The interaction with phosphorylated eIF2alpha stretch occupies residues 1-535; it reads MNISKFFLIF…NELKSTSNAM (535 aa). 2 stretches are compositionally biased toward basic and acidic residues: residues 267–279 and 288–326; these read EKSA…KELN and NSKK…KSEN. 4 disordered regions span residues 267 to 326, 613 to 646, 1066 to 1087, and 1170 to 1196; these read EKSA…KSEN, NTNT…SENN, NETP…IQPN, and EVPD…NKDD. A compositionally biased stretch (low complexity) spans 631–646; sequence NNYTDGNEGNNNSENN.

Mn(2+) serves as cofactor.

The enzyme catalyses O-phospho-L-seryl-[protein] + H2O = L-seryl-[protein] + phosphate. Functionally, protein phosphatase which dephosphorylates 'Ser-59' of translation factor eIF2alpha during the liver stage, thus enabling protein translation. The protein is Serine/threonine-protein phosphatase UIS2 of Plasmodium berghei (strain Anka).